Reading from the N-terminus, the 310-residue chain is Alpha/beta hydrolase domain-containing protein 17C (310 aa).

Catalysis depends on charge relay system residues serine 192, aspartate 257, and histidine 286.

Belongs to the AB hydrolase superfamily. ABHD17 family. Palmitoylated on cysteine residues located in a cysteine cluster at the N-terminus which promotes membrane localization.

The protein localises to the recycling endosome membrane. It localises to the cell projection. It is found in the dendritic spine. The protein resides in the postsynaptic density membrane. The enzyme catalyses S-hexadecanoyl-L-cysteinyl-[protein] + H2O = L-cysteinyl-[protein] + hexadecanoate + H(+). Its function is as follows. Hydrolyzes fatty acids from S-acylated cysteine residues in proteins. This chain is Alpha/beta hydrolase domain-containing protein 17C, found in Xenopus tropicalis (Western clawed frog).